Consider the following 179-residue polypeptide: ATP-dependent protease subunit HslV (179 aa).

Threonine 5 is a catalytic residue. Residues cysteine 164 and threonine 167 each contribute to the Na(+) site.

This sequence belongs to the peptidase T1B family. HslV subfamily. In terms of assembly, a double ring-shaped homohexamer of HslV is capped on each side by a ring-shaped HslU homohexamer. The assembly of the HslU/HslV complex is dependent on binding of ATP.

It localises to the cytoplasm. The catalysed reaction is ATP-dependent cleavage of peptide bonds with broad specificity.. Its activity is regulated as follows. Allosterically activated by HslU binding. Protease subunit of a proteasome-like degradation complex believed to be a general protein degrading machinery. The protein is ATP-dependent protease subunit HslV of Carboxydothermus hydrogenoformans (strain ATCC BAA-161 / DSM 6008 / Z-2901).